The sequence spans 76 residues: Small ribosomal subunit protein bS18 (76 aa).

The protein belongs to the bacterial ribosomal protein bS18 family. As to quaternary structure, part of the 30S ribosomal subunit. Forms a tight heterodimer with protein bS6.

Its function is as follows. Binds as a heterodimer with protein bS6 to the central domain of the 16S rRNA, where it helps stabilize the platform of the 30S subunit. The polypeptide is Small ribosomal subunit protein bS18 (Symbiobacterium thermophilum (strain DSM 24528 / JCM 14929 / IAM 14863 / T)).